Consider the following 382-residue polypeptide: Putative glutamate--cysteine ligase 2-1 (382 aa).

The protein belongs to the glutamate--cysteine ligase type 2 family. YbdK subfamily.

The catalysed reaction is L-cysteine + L-glutamate + ATP = gamma-L-glutamyl-L-cysteine + ADP + phosphate + H(+). ATP-dependent carboxylate-amine ligase which exhibits weak glutamate--cysteine ligase activity. This chain is Putative glutamate--cysteine ligase 2-1, found in Frankia casuarinae (strain DSM 45818 / CECT 9043 / HFP020203 / CcI3).